Reading from the N-terminus, the 1052-residue chain is RTX-III toxin determinant A from serotype 8 (1052 aa).

3 consecutive transmembrane segments (helical) span residues 248 to 265, 275 to 334, and 372 to 418; these read GLDI…SFAL, KVAA…LRVA, and DASI…GILE. Hemolysin-type calcium-binding repeat units lie at residues 744–761, 762–779, 780–797, 798–815, 826–843, and 844–861; these read KGSK…DDLL, NGND…NDEL, RGDN…NDKL, LGGN…NDEL, RGGK…SDLL, and DGGE…SDFY.

It belongs to the RTX prokaryotic toxin (TC 1.C.11) family. In terms of processing, palmitoylated by ApxIIIC. The toxin only becomes active when modified.

Its subcellular location is the secreted. The protein resides in the host cell membrane. Its function is as follows. Does not have hemolytic activity but shows a strong cytotoxicity towards alveolar macrophages and neutrophils. The protein is RTX-III toxin determinant A from serotype 8 (apxIIIA) of Actinobacillus pleuropneumoniae (Haemophilus pleuropneumoniae).